Reading from the N-terminus, the 43-residue chain is Alpha-1-antiproteinase 4 (43 aa).

The protein belongs to the serpin family. Post-translationally, N-glycosylated with carbohydrates having biantennary side chains. In terms of tissue distribution, plasma.

The protein localises to the secreted. This chain is Alpha-1-antiproteinase 4, found in Equus caballus (Horse).